Reading from the N-terminus, the 494-residue chain is Alpha-amylase-related protein (494 aa).

The signal sequence occupies residues 1 to 20; the sequence is MFKFALALTLCLAGASLSLA. A Pyrrolidone carboxylic acid modification is found at Gln-21. A disulfide bridge links Cys-48 with Cys-104. Asn-118, Gln-169, and Asp-178 together coordinate Ca(2+). A disulfide bridge links Cys-157 with Cys-171. Arg-206 contacts chloride. Residue Asp-208 is the Nucleophile of the active site. Residue His-212 participates in Ca(2+) binding. Glu-245 (proton donor) is an active-site residue. The chloride site is built by Asn-308 and Arg-343. Disulfide bonds link Cys-376–Cys-382, Cys-418–Cys-441, and Cys-448–Cys-460.

This sequence belongs to the glycosyl hydrolase 13 family. In terms of assembly, monomer. It depends on Ca(2+) as a cofactor. Requires chloride as cofactor.

Its subcellular location is the secreted. It carries out the reaction Endohydrolysis of (1-&gt;4)-alpha-D-glucosidic linkages in polysaccharides containing three or more (1-&gt;4)-alpha-linked D-glucose units.. The protein is Alpha-amylase-related protein (Amyrel) of Drosophila punjabiensis (Fruit fly).